A 1295-amino-acid polypeptide reads, in one-letter code: Phosphoribosylformylglycinamidine synthase (1295 aa).

The tract at residues 305–327 (WPGAATGSGGEIRDEGATGRGAK) is disordered. Residues 307 to 318 (GAATGSGGEIRD) and A678 contribute to the ATP site. Residues E718, N722, and D884 each contribute to the Mg(2+) site. Residue S886 participates in ATP binding. A Glutamine amidotransferase type-1 domain is found at 1042–1295 (VAVLREQGVN…IFRNARKQLG (254 aa)). The active-site Nucleophile is C1135. Active-site residues include H1260 and E1262.

This sequence in the N-terminal section; belongs to the FGAMS family. In terms of assembly, monomer.

It localises to the cytoplasm. The catalysed reaction is N(2)-formyl-N(1)-(5-phospho-beta-D-ribosyl)glycinamide + L-glutamine + ATP + H2O = 2-formamido-N(1)-(5-O-phospho-beta-D-ribosyl)acetamidine + L-glutamate + ADP + phosphate + H(+). The protein operates within purine metabolism; IMP biosynthesis via de novo pathway; 5-amino-1-(5-phospho-D-ribosyl)imidazole from N(2)-formyl-N(1)-(5-phospho-D-ribosyl)glycinamide: step 1/2. In terms of biological role, phosphoribosylformylglycinamidine synthase involved in the purines biosynthetic pathway. Catalyzes the ATP-dependent conversion of formylglycinamide ribonucleotide (FGAR) and glutamine to yield formylglycinamidine ribonucleotide (FGAM) and glutamate. This chain is Phosphoribosylformylglycinamidine synthase, found in Escherichia coli O6:K15:H31 (strain 536 / UPEC).